Here is a 262-residue protein sequence, read N- to C-terminus: Ribosomal RNA small subunit methyltransferase A (262 aa).

S-adenosyl-L-methionine contacts are provided by histidine 16, leucine 18, glycine 43, glutamate 64, aspartate 89, and asparagine 109.

Belongs to the class I-like SAM-binding methyltransferase superfamily. rRNA adenine N(6)-methyltransferase family. RsmA subfamily.

It localises to the cytoplasm. It carries out the reaction adenosine(1518)/adenosine(1519) in 16S rRNA + 4 S-adenosyl-L-methionine = N(6)-dimethyladenosine(1518)/N(6)-dimethyladenosine(1519) in 16S rRNA + 4 S-adenosyl-L-homocysteine + 4 H(+). Its function is as follows. Specifically dimethylates two adjacent adenosines (A1518 and A1519) in the loop of a conserved hairpin near the 3'-end of 16S rRNA in the 30S particle. May play a critical role in biogenesis of 30S subunits. This Xanthomonas axonopodis pv. citri (strain 306) protein is Ribosomal RNA small subunit methyltransferase A.